Reading from the N-terminus, the 499-residue chain is Cryptochrome-1 (499 aa).

FAD-binding positions include R190, S218, S220, Q261, H328, 360 to 362 (DAD), C366, and N369.

The protein belongs to the DNA photolyase class-1 family. In terms of assembly, interacts with tim and per; promoted by light conditions. The cofactor is FAD.

The protein resides in the cytoplasm. Its subcellular location is the perinuclear region. It is found in the nucleus. In terms of biological role, blue light-dependent regulator that is the input of the circadian feedback loop. Has no photolyase activity for cyclobutane pyrimidine dimers or 6-4 photoproducts. Regulation of expression by light suggests a role in photoreception for locomotor activity rhythms. Functions, together with per, as a transcriptional repressor required for the oscillation of peripheral circadian clocks and for the correct specification of clock cells. Genes directly activated by the transcription factors Clock (Clk) and cycle (cyc) are repressed by cry. This Culex quinquefasciatus (Southern house mosquito) protein is Cryptochrome-1.